The sequence spans 4450 residues: Gramicidin S synthase 2 (4450 aa).

The interval 467 to 1044 is domain 1 (proline-activating); the sequence is DKTIHQLFTE…IQEISNYING (578 aa). 4 consecutive Carrier domains span residues 971–1046, 2006–2081, 3051–3126, and 4089–4164; these read VPTN…NGAK, APSS…ADGE, APRT…EETD, and APRN…THQE. Serine 1006, serine 2041, serine 3086, and serine 4124 each carry O-(pantetheine 4'-phosphoryl)serine. The interval 1521–2080 is domain 2 (valine-activating); sequence DHVAVGWKDQ…SALAQYIADG (560 aa). The segment at 2538 to 3134 is domain 3 (ornithine-activating); that stretch reads YATNKIFHEL…TDTEQYMAIQ (597 aa). Residues 3590-4172 are domain 4 (leucine-activating); it reads IQELFEEQVK…QESENNVHQP (583 aa).

It belongs to the ATP-dependent AMP-binding enzyme family. In terms of assembly, large multienzyme complex of GrsA and GrsB. Requires pantetheine 4'-phosphate as cofactor.

It participates in antibiotic biosynthesis; gramicidin S biosynthesis. In terms of biological role, this protein is a multifunctional enzyme, able to activate and polymerize the amino acids Pro, Val, Orn and Leu. Activation sites for these AA consist of individual domains. The sequence is that of Gramicidin S synthase 2 (grsB) from Brevibacillus brevis (Bacillus brevis).